A 143-amino-acid chain; its full sequence is Peptide methionine sulfoxide reductase B8 (143 aa).

One can recognise a MsrB domain in the interval 18–139 (DEEWRAVLSP…NSVSLKFASA (122 aa)). 4 residues coordinate Zn(2+): cysteine 57, cysteine 60, cysteine 103, and cysteine 106. Cysteine 75 and cysteine 128 are disulfide-bonded. Cysteine 128 functions as the Nucleophile in the catalytic mechanism.

It belongs to the MsrB Met sulfoxide reductase family. It depends on Zn(2+) as a cofactor.

Its subcellular location is the cytoplasm. It localises to the cytosol. It catalyses the reaction L-methionyl-[protein] + [thioredoxin]-disulfide + H2O = L-methionyl-(R)-S-oxide-[protein] + [thioredoxin]-dithiol. Its function is as follows. Catalyzes the reduction of methionine sulfoxide (MetSO) to methionine in proteins. Plays a protective role against oxidative stress by restoring activity to proteins that have been inactivated by methionine oxidation. MSRB family specifically reduces the MetSO R-enantiomer. The polypeptide is Peptide methionine sulfoxide reductase B8 (MSRB8) (Arabidopsis thaliana (Mouse-ear cress)).